The chain runs to 142 residues: Negative cofactor 2 complex subunit alpha (142 aa).

Over residues 1–11 (MADQVPVTTQL) the composition is skewed to polar residues. Residues 1 to 43 (MADQVPVTTQLPPIKPEHEVPLDAGGSPVGNMGTNSNNNNELG) form a disordered region. The residue at position 27 (serine 27) is a Phosphoserine. Residues 29-137 (VGNMGTNSNN…LCVEEGQTQP (109 aa)) form the Histone-fold domain. At serine 141 the chain carries Phosphoserine.

The protein belongs to the NC2 alpha/DRAP1 family. In terms of assembly, component of the NC2 (negative cofactor 2) complex composed of BUR6 and NCB2. The NC2 complex associates with SPT15/TBP. Interacts with SPT15/TBP.

The protein resides in the nucleus. Its function is as follows. Component of the NC2 complex which represses RNA polymerase II transcription through binding to SPT15/TBP and thereby inhibiting the assembly of the preinitiation complex. The NC2 complex may also mediate transcriptional activation from TATA-driven promoters through association with SPT15/TBP. The sequence is that of Negative cofactor 2 complex subunit alpha (BUR6) from Saccharomyces cerevisiae (strain ATCC 204508 / S288c) (Baker's yeast).